The sequence spans 318 residues: Ribosomal RNA small subunit methyltransferase H (318 aa).

S-adenosyl-L-methionine-binding positions include 33-35 (GGH), Asp53, Phe80, Asp101, and Gln108.

The protein belongs to the methyltransferase superfamily. RsmH family.

It localises to the cytoplasm. It carries out the reaction cytidine(1402) in 16S rRNA + S-adenosyl-L-methionine = N(4)-methylcytidine(1402) in 16S rRNA + S-adenosyl-L-homocysteine + H(+). Specifically methylates the N4 position of cytidine in position 1402 (C1402) of 16S rRNA. The polypeptide is Ribosomal RNA small subunit methyltransferase H (Symbiobacterium thermophilum (strain DSM 24528 / JCM 14929 / IAM 14863 / T)).